The sequence spans 147 residues: MEIILKEDVVNLGYKNDIVTVKSGYGRNYLIPTGKAVIASPSAKKMLAEELKQRAHKLEKIKKDAEAMAEQLKDVTLTIATKVSATGTIFGSVSNIQIAEELEKLGHKVDRKIIVVKDAVKEVGSYKAIVKLHKEVSVEIPFEVVAE.

Belongs to the bacterial ribosomal protein bL9 family.

Functionally, binds to the 23S rRNA. In Phocaeicola vulgatus (strain ATCC 8482 / DSM 1447 / JCM 5826 / CCUG 4940 / NBRC 14291 / NCTC 11154) (Bacteroides vulgatus), this protein is Large ribosomal subunit protein bL9.